A 501-amino-acid chain; its full sequence is Cytochrome P450 monooxygeanse terP (501 aa).

The helical transmembrane segment at 2-22 (PSLLLSLLLLQVPIICAWLLV) threads the bilayer. Position 441 (cysteine 441) interacts with heme.

This sequence belongs to the cytochrome P450 family. The cofactor is heme.

It is found in the membrane. It participates in secondary metabolite biosynthesis. Functionally, cytochrome P450 monooxygeanse; part of the gene cluster that mediates the biosynthesis of terpendoles, indole-diterpene (IDT) mycotoxins including terpendole I, terpendole K, terpendole C, as well as the kinesin Eg5 inhibitor terpendole E. TerP has dual activity and is able to convert terpendole E to 13-desoxyterpendole I and paspaline to 13-desoxypaxilline. Terpendoles biosynthesis begins with the synthesis of geranylgeranyl diphosphate (GGPP) by a yet unidentified GGPP synthase. Condensation of indole-3-glycerol phosphate with GGPP by the prenyltransferase terC then forms 3-geranylgeranylindole (3-GGI), followed by epoxidation and cyclization of this intermediate (by the FAD-dependent monooxygeanse terM and the terpene cyclase terB) to form paspaline. The cytochrome monooxygenase terQ then hydroxylates paspalline at C-11 to yield terpendole E. The cytochrome monooxygenase terP converts terpendole E to 13-desoxyterpendole I, and terQ converts 13-desoxyterpendole I into terpendole I. TerF and terK are required for conversion of terpendole I to terpendole C which is further converted to terpendole K. This chain is Cytochrome P450 monooxygeanse terP, found in Tolypocladium album (Soil fungus).